The sequence spans 583 residues: 2-succinyl-5-enolpyruvyl-6-hydroxy-3-cyclohexene-1-carboxylate synthase (583 aa).

Belongs to the TPP enzyme family. MenD subfamily. In terms of assembly, homodimer. Mg(2+) is required as a cofactor. Requires Mn(2+) as cofactor. The cofactor is thiamine diphosphate.

The enzyme catalyses isochorismate + 2-oxoglutarate + H(+) = 5-enolpyruvoyl-6-hydroxy-2-succinyl-cyclohex-3-ene-1-carboxylate + CO2. It participates in quinol/quinone metabolism; 1,4-dihydroxy-2-naphthoate biosynthesis; 1,4-dihydroxy-2-naphthoate from chorismate: step 2/7. It functions in the pathway quinol/quinone metabolism; menaquinone biosynthesis. Catalyzes the thiamine diphosphate-dependent decarboxylation of 2-oxoglutarate and the subsequent addition of the resulting succinic semialdehyde-thiamine pyrophosphate anion to isochorismate to yield 2-succinyl-5-enolpyruvyl-6-hydroxy-3-cyclohexene-1-carboxylate (SEPHCHC). The chain is 2-succinyl-5-enolpyruvyl-6-hydroxy-3-cyclohexene-1-carboxylate synthase from Chlorobium luteolum (strain DSM 273 / BCRC 81028 / 2530) (Pelodictyon luteolum).